The following is a 346-amino-acid chain: Cysteinyl leukotriene receptor 2 (346 aa).

Residues 1–42 (MERKFMSLQPSISVSEMEPNGTFSNNNSRNCTIENFKREFFP) lie on the Extracellular side of the membrane. N-linked (GlcNAc...) asparagine glycosylation is found at asparagine 20, asparagine 26, and asparagine 30. A helical transmembrane segment spans residues 43-63 (IVYLIIFFWGVLGNGLSIYVF). At 64–72 (LQPYKKSTS) the chain is on the cytoplasmic side. The chain crosses the membrane as a helical span at residues 73-93 (VNVFMLNLAISDLLFISTLPF). The Extracellular portion of the chain corresponds to 94-123 (RADYYLRGSNWIFGDLACRIMSYSLYVNMY). A disulfide bridge connects residues cysteine 111 and cysteine 187. A helical membrane pass occupies residues 124–144 (SSIYFLTVLSVVRFLAMVHPF). Residues 145–153 (RLLHVTSIR) lie on the Cytoplasmic side of the membrane. Residues 154 to 174 (SAWILCGIIWILIMASSIMLL) form a helical membrane-spanning segment. The Extracellular portion of the chain corresponds to 175–204 (DSGSEQNGSVTSCLELNLYKIAKLQTMNYI). The N-linked (GlcNAc...) asparagine glycan is linked to asparagine 181. The chain crosses the membrane as a helical span at residues 205–225 (ALVVGCLLPFFTLSICYLLII). Residues 226-245 (RVLLKVEVPESGLRVSHRKA) are Cytoplasmic-facing. The helical transmembrane segment at 246–266 (LTTIIITLIIFFLCFLPYHTL) threads the bilayer. At 267–286 (RTVHLTTWKVGLCKDRLHKA) the chain is on the extracellular side. The helical transmembrane segment at 287–307 (LVITLALAAANACFNPLLYYF) threads the bilayer. The Cytoplasmic segment spans residues 308–346 (AGENFKDRLKSALRKGHPQKAKTKCVFPVSVWLRKETRV).

This sequence belongs to the G-protein coupled receptor 1 family. In terms of tissue distribution, widely expressed, with highest levels in the heart, placenta, spleen, peripheral blood leukocytes and adrenal gland. In lung, expressed in the interstitial macrophages, and slightly in smooth muscle cells.

It is found in the cell membrane. In terms of biological role, receptor for cysteinyl leukotrienes. The response is mediated via a G-protein that activates a phosphatidylinositol-calcium second messenger system. Stimulation by BAY u9773, a partial agonist, induces specific contractions of pulmonary veins and might also have an indirect role in the relaxation of the pulmonary vascular endothelium. The rank order of affinities for the leukotrienes is LTC4 = LTD4 &gt;&gt; LTE4. This is Cysteinyl leukotriene receptor 2 (CYSLTR2) from Homo sapiens (Human).